A 520-amino-acid chain; its full sequence is Sodium-dependent dicarboxylate transporter SdcS (520 aa).

14 helical membrane-spanning segments follow: residues Ala30–Phe50, Leu55–Thr75, Ala77–Leu97, Ser104–Met124, Ser160–Ile180, Ile207–Ile227, Phe242–Leu262, Lys298–Leu318, Val323–Ile343, Glu362–Ser382, Gly399–Val419, Met428–Met448, Ala452–Phe472, and Leu491–Ile511.

The protein belongs to the SLC13A/DASS transporter (TC 2.A.47) family. NADC subfamily.

It is found in the cell membrane. In terms of biological role, mediates the transport of the dicarboxylates fumarate, malate, and succinate across the cytoplasmic membrane via a Na(+)-electrochemical gradient. The protein is Sodium-dependent dicarboxylate transporter SdcS (sdcS) of Staphylococcus aureus (strain MSSA476).